Here is a 339-residue protein sequence, read N- to C-terminus: 3-isopropylmalate dehydrogenase (339 aa).

Positions 88, 98, 122, and 212 each coordinate substrate. The Mg(2+) site is built by Asp-212, Asp-236, and Asp-240. Position 272 to 284 (272 to 284) interacts with NAD(+); the sequence is GSAPDIAGKGIAD.

This sequence belongs to the isocitrate and isopropylmalate dehydrogenases family. LeuB type 2 subfamily. As to quaternary structure, homodimer. The cofactor is Mg(2+). Mn(2+) serves as cofactor.

Its subcellular location is the cytoplasm. The catalysed reaction is (2R,3S)-3-isopropylmalate + NAD(+) = 4-methyl-2-oxopentanoate + CO2 + NADH. Its pathway is amino-acid biosynthesis; L-leucine biosynthesis; L-leucine from 3-methyl-2-oxobutanoate: step 3/4. Its function is as follows. Catalyzes the oxidation of 3-carboxy-2-hydroxy-4-methylpentanoate (3-isopropylmalate) to 3-carboxy-4-methyl-2-oxopentanoate. The product decarboxylates to 4-methyl-2 oxopentanoate. The polypeptide is 3-isopropylmalate dehydrogenase (Corynebacterium aurimucosum (strain ATCC 700975 / DSM 44827 / CIP 107346 / CN-1) (Corynebacterium nigricans)).